The chain runs to 803 residues: Leucine--tRNA ligase (803 aa).

A 'HIGH' region motif is present at residues 40 to 51 (PYPSGAGLHVGH). Residues 575 to 579 (KMSKS) carry the 'KMSKS' region motif. Lysine 578 contributes to the ATP binding site.

The protein belongs to the class-I aminoacyl-tRNA synthetase family.

The protein localises to the cytoplasm. The catalysed reaction is tRNA(Leu) + L-leucine + ATP = L-leucyl-tRNA(Leu) + AMP + diphosphate. This chain is Leucine--tRNA ligase, found in Listeria welshimeri serovar 6b (strain ATCC 35897 / DSM 20650 / CCUG 15529 / CIP 8149 / NCTC 11857 / SLCC 5334 / V8).